The sequence spans 256 residues: Fructose-1,6-bisphosphatase/inositol-1-monophosphatase (256 aa).

Mg(2+) is bound by residues E67, D83, L85, and D86. Residues 86 to 88, R170, I175, and R194 each bind substrate; that span reads DGS. D201 provides a ligand contact to Mg(2+).

It belongs to the inositol monophosphatase superfamily. FBPase class 4 family. In terms of assembly, homodimer. Mg(2+) serves as cofactor.

The catalysed reaction is beta-D-fructose 1,6-bisphosphate + H2O = beta-D-fructose 6-phosphate + phosphate. The enzyme catalyses a myo-inositol phosphate + H2O = myo-inositol + phosphate. Its function is as follows. Phosphatase with broad specificity; it can dephosphorylate fructose 1,6-bisphosphate (FBP) and inositol-1-phosphate (IMP). However, while possessing a high FBPase activity in vitro, does not participate in gluconeogenesis in vivo. This Thermococcus kodakarensis (strain ATCC BAA-918 / JCM 12380 / KOD1) (Pyrococcus kodakaraensis (strain KOD1)) protein is Fructose-1,6-bisphosphatase/inositol-1-monophosphatase (suhB).